Here is a 192-residue protein sequence, read N- to C-terminus: Dynein axonemal light chain 1 (192 aa).

4 LRR repeats span residues 49-70 (NCEKLSLSTNCIEKIANLNGLK), 71-92 (YLKILSLGRNNIKNLNGLEAVG), 94-115 (TLEELWISYNLIEKLKGIHVMK), and 116-137 (KLKVLYMSNNLVKDWAEFSKLG). Residues 150 to 192 (NPLEEKHTAEGNWMEEAVKRLPKLKKLDGNPVIKQEEEEGDES) enclose the LRRCT domain.

The protein belongs to the dynein light chain LC1-type family. Interacts with DNAH5, a outer arm dynein heavy chain. Interacts with tubulin located within the A-tubule of the outer doublets in a ATP-independent manner.

The protein localises to the cytoplasm. The protein resides in the cytoskeleton. Its subcellular location is the cilium axoneme. Part of the multisubunit axonemal ATPase complexes that generate the force for cilia motility and govern beat frequency. Component of the outer arm dynein (ODA). May be involved in a mechanosensory feedback mechanism controlling ODA activity based on external conformational cues by tethering the outer arm dynein heavy chain (DNAH5) to the microtubule within the axoneme. The chain is Dynein axonemal light chain 1 (dnal1) from Xenopus laevis (African clawed frog).